Reading from the N-terminus, the 205-residue chain is MSILAYNGGCVVAMRGKDCVAIATDHRFGIQAQTISTDFKKVFHIGPRMFLGLTGLQTDILTVRDRLMFRKNLYETRENREMCPKPFSAMMSSFLYEHRFGPYFIEPVVAGLDPKTMEPFICNMDLIGCPNAPDDFVVAGTCAEQLYGMCETLWKPDLEPDQLFEVIAQSIVNAFDRDAMSGWGATVYIIEKDKITERTLKTRMD.

The protein belongs to the peptidase T1B family. As to quaternary structure, the 26S proteasome consists of a 20S proteasome core and two 19S regulatory subunits. The 20S proteasome core is composed of 28 subunits that are arranged in four stacked rings, resulting in a barrel-shaped structure. The two end rings are each formed by seven alpha subunits, and the two central rings are each formed by seven beta subunits. The catalytic chamber with the active sites is on the inside of the barrel.

The protein localises to the cytoplasm. It localises to the nucleus. Its function is as follows. Non-catalytic component of the proteasome, a multicatalytic proteinase complex which is characterized by its ability to cleave peptides with Arg, Phe, Tyr, Leu, and Glu adjacent to the leaving group at neutral or slightly basic pH. The proteasome has an ATP-dependent proteolytic activity. In Drosophila melanogaster (Fruit fly), this protein is Proteasome subunit beta type-3.